A 129-amino-acid chain; its full sequence is Cytochrome c oxidase subunit 5B, mitochondrial (129 aa).

Residues 1–31 (MASRLLRGAGALAAQTLRARGPNGVAVVRSM) constitute a mitochondrion transit peptide. Lysine 68 and lysine 86 each carry N6-acetyllysine. Zn(2+) is bound by residues cysteine 91, cysteine 93, cysteine 113, and cysteine 116. Lysine 121 is modified (N6-acetyllysine).

This sequence belongs to the cytochrome c oxidase subunit 5B family. Component of the cytochrome c oxidase (complex IV, CIV), a multisubunit enzyme composed of 14 subunits. The complex is composed of a catalytic core of 3 subunits MT-CO1, MT-CO2 and MT-CO3, encoded in the mitochondrial DNA, and 11 supernumerary subunits COX4I, COX5A, COX5B, COX6A, COX6B, COX6C, COX7A, COX7B, COX7C, COX8 and NDUFA4, which are encoded in the nuclear genome. The complex exists as a monomer or a dimer and forms supercomplexes (SCs) in the inner mitochondrial membrane with NADH-ubiquinone oxidoreductase (complex I, CI) and ubiquinol-cytochrome c oxidoreductase (cytochrome b-c1 complex, complex III, CIII), resulting in different assemblies (supercomplex SCI(1)III(2)IV(1) and megacomplex MCI(2)III(2)IV(2)).

Its subcellular location is the mitochondrion inner membrane. Its pathway is energy metabolism; oxidative phosphorylation. Functionally, component of the cytochrome c oxidase, the last enzyme in the mitochondrial electron transport chain which drives oxidative phosphorylation. The respiratory chain contains 3 multisubunit complexes succinate dehydrogenase (complex II, CII), ubiquinol-cytochrome c oxidoreductase (cytochrome b-c1 complex, complex III, CIII) and cytochrome c oxidase (complex IV, CIV), that cooperate to transfer electrons derived from NADH and succinate to molecular oxygen, creating an electrochemical gradient over the inner membrane that drives transmembrane transport and the ATP synthase. Cytochrome c oxidase is the component of the respiratory chain that catalyzes the reduction of oxygen to water. Electrons originating from reduced cytochrome c in the intermembrane space (IMS) are transferred via the dinuclear copper A center (CU(A)) of subunit 2 and heme A of subunit 1 to the active site in subunit 1, a binuclear center (BNC) formed by heme A3 and copper B (CU(B)). The BNC reduces molecular oxygen to 2 water molecules using 4 electrons from cytochrome c in the IMS and 4 protons from the mitochondrial matrix. This Sus scrofa (Pig) protein is Cytochrome c oxidase subunit 5B, mitochondrial (COX5B).